Consider the following 865-residue polypeptide: Valine--tRNA ligase (865 aa).

A 'HIGH' region motif is present at residues 43–53; that stretch reads PNITGRIHMGH. The 'KMSKS' region motif lies at 523–527; it reads KMSKS. Position 526 (Lys526) interacts with ATP. A coiled-coil region spans residues 797-865; that stretch reads GLIDFEKEKE…RLESILRDLE (69 aa).

The protein belongs to the class-I aminoacyl-tRNA synthetase family. ValS type 1 subfamily. As to quaternary structure, monomer.

It localises to the cytoplasm. It carries out the reaction tRNA(Val) + L-valine + ATP = L-valyl-tRNA(Val) + AMP + diphosphate. In terms of biological role, catalyzes the attachment of valine to tRNA(Val). As ValRS can inadvertently accommodate and process structurally similar amino acids such as threonine, to avoid such errors, it has a 'posttransfer' editing activity that hydrolyzes mischarged Thr-tRNA(Val) in a tRNA-dependent manner. This is Valine--tRNA ligase from Thermotoga maritima (strain ATCC 43589 / DSM 3109 / JCM 10099 / NBRC 100826 / MSB8).